We begin with the raw amino-acid sequence, 505 residues long: Flagellin (505 aa).

This sequence belongs to the bacterial flagellin family.

The protein resides in the secreted. Its subcellular location is the bacterial flagellum. Its function is as follows. Flagellin is the subunit protein which polymerizes to form the filaments of bacterial flagella. This chain is Flagellin (fliC), found in Salmonella dublin.